The following is a 232-amino-acid chain: dITP/XTP pyrophosphatase (232 aa).

10-15 (TRNKGK) contributes to the substrate binding site. Asp72 functions as the Proton acceptor in the catalytic mechanism. Residue Asp72 participates in Mg(2+) binding. Substrate contacts are provided by residues Ser73, 153 to 156 (FGYD), Lys176, and 181 to 182 (HR).

It belongs to the HAM1 NTPase family. Homodimer. It depends on Mg(2+) as a cofactor.

The catalysed reaction is XTP + H2O = XMP + diphosphate + H(+). It catalyses the reaction dITP + H2O = dIMP + diphosphate + H(+). The enzyme catalyses ITP + H2O = IMP + diphosphate + H(+). Functionally, pyrophosphatase that catalyzes the hydrolysis of nucleoside triphosphates to their monophosphate derivatives, with a high preference for the non-canonical purine nucleotides XTP (xanthosine triphosphate), dITP (deoxyinosine triphosphate) and ITP. Seems to function as a house-cleaning enzyme that removes non-canonical purine nucleotides from the nucleotide pool, thus preventing their incorporation into DNA/RNA and avoiding chromosomal lesions. The polypeptide is dITP/XTP pyrophosphatase (Syntrophobacter fumaroxidans (strain DSM 10017 / MPOB)).